The chain runs to 240 residues: Methylthioribulose-1-phosphate dehydratase (240 aa).

The segment covering 1–10 (MAQEIEKTNN) has biased composition (basic and acidic residues). The tract at residues 1–20 (MAQEIEKTNNDHLVQSSDPE) is disordered. Cys100 is a substrate binding site. Zn(2+)-binding residues include His117 and His119. The Proton donor/acceptor role is filled by Glu146. His202 serves as a coordination point for Zn(2+).

It belongs to the aldolase class II family. MtnB subfamily. The cofactor is Zn(2+).

The protein localises to the cytoplasm. The enzyme catalyses 5-(methylsulfanyl)-D-ribulose 1-phosphate = 5-methylsulfanyl-2,3-dioxopentyl phosphate + H2O. The protein operates within amino-acid biosynthesis; L-methionine biosynthesis via salvage pathway; L-methionine from S-methyl-5-thio-alpha-D-ribose 1-phosphate: step 2/6. Catalyzes the dehydration of methylthioribulose-1-phosphate (MTRu-1-P) into 2,3-diketo-5-methylthiopentyl-1-phosphate (DK-MTP-1-P). In Aspergillus fumigatus (strain CBS 144.89 / FGSC A1163 / CEA10) (Neosartorya fumigata), this protein is Methylthioribulose-1-phosphate dehydratase.